The primary structure comprises 561 residues: Arginine--tRNA ligase (561 aa).

The 'HIGH' region signature appears at Ala129–His139.

The protein belongs to the class-I aminoacyl-tRNA synthetase family. In terms of assembly, monomer.

The protein localises to the cytoplasm. It carries out the reaction tRNA(Arg) + L-arginine + ATP = L-arginyl-tRNA(Arg) + AMP + diphosphate. The protein is Arginine--tRNA ligase of Bordetella parapertussis (strain 12822 / ATCC BAA-587 / NCTC 13253).